An 883-amino-acid chain; its full sequence is Phosphoenolpyruvate carboxylase (883 aa).

Catalysis depends on residues His138 and Lys546.

The protein belongs to the PEPCase type 1 family. In terms of assembly, homotetramer. Mg(2+) serves as cofactor.

It carries out the reaction oxaloacetate + phosphate = phosphoenolpyruvate + hydrogencarbonate. The enzyme has distinct binding sites for each of the allosteric effectors such as acetyl-CoA, fructose 1,6-bisphosphate, guanosine 3'-diphosphate 5'-diphosphate, long chain fatty acids, and L-aspartate. Its function is as follows. Forms oxaloacetate, a four-carbon dicarboxylic acid source for the tricarboxylic acid cycle. This chain is Phosphoenolpyruvate carboxylase, found in Escherichia coli O157:H7.